The sequence spans 220 residues: ATP-dependent Clp protease proteolytic subunit (220 aa).

Residue serine 122 is the Nucleophile of the active site. Residue histidine 147 is part of the active site.

Belongs to the peptidase S14 family. Fourteen ClpP subunits assemble into 2 heptameric rings which stack back to back to give a disk-like structure with a central cavity, resembling the structure of eukaryotic proteasomes.

It is found in the cytoplasm. The catalysed reaction is Hydrolysis of proteins to small peptides in the presence of ATP and magnesium. alpha-casein is the usual test substrate. In the absence of ATP, only oligopeptides shorter than five residues are hydrolyzed (such as succinyl-Leu-Tyr-|-NHMec, and Leu-Tyr-Leu-|-Tyr-Trp, in which cleavage of the -Tyr-|-Leu- and -Tyr-|-Trp bonds also occurs).. In terms of biological role, cleaves peptides in various proteins in a process that requires ATP hydrolysis. Has a chymotrypsin-like activity. Plays a major role in the degradation of misfolded proteins. The polypeptide is ATP-dependent Clp protease proteolytic subunit (Colwellia psychrerythraea (strain 34H / ATCC BAA-681) (Vibrio psychroerythus)).